We begin with the raw amino-acid sequence, 485 residues long: CCA-adding enzyme (485 aa).

Residues Ser-53 and Arg-56 each contribute to the ATP site. Ser-53 and Arg-56 together coordinate CTP. Mg(2+)-binding residues include Asp-65, Asp-67, and Asp-124. ATP is bound by residues His-146, Lys-164, and Tyr-173. The CTP site is built by His-146, Lys-164, and Tyr-173.

This sequence belongs to the tRNA nucleotidyltransferase/poly(A) polymerase family. Archaeal CCA-adding enzyme subfamily. As to quaternary structure, homodimer. It depends on Mg(2+) as a cofactor.

It carries out the reaction a tRNA precursor + 2 CTP + ATP = a tRNA with a 3' CCA end + 3 diphosphate. It catalyses the reaction a tRNA with a 3' CCA end + 2 CTP + ATP = a tRNA with a 3' CCACCA end + 3 diphosphate. Catalyzes the addition and repair of the essential 3'-terminal CCA sequence in tRNAs without using a nucleic acid template. Adds these three nucleotides in the order of C, C, and A to the tRNA nucleotide-73, using CTP and ATP as substrates and producing inorganic pyrophosphate. tRNA 3'-terminal CCA addition is required both for tRNA processing and repair. Also involved in tRNA surveillance by mediating tandem CCA addition to generate a CCACCA at the 3' terminus of unstable tRNAs. While stable tRNAs receive only 3'-terminal CCA, unstable tRNAs are marked with CCACCA and rapidly degraded. This Methanopyrus kandleri (strain AV19 / DSM 6324 / JCM 9639 / NBRC 100938) protein is CCA-adding enzyme.